The sequence spans 417 residues: Serine hydroxymethyltransferase 3 (417 aa).

(6S)-5,6,7,8-tetrahydrofolate contacts are provided by residues Leu-121 and 125 to 127 (GHL). Lys-229 bears the N6-(pyridoxal phosphate)lysine mark. 354–356 (SPF) lines the (6S)-5,6,7,8-tetrahydrofolate pocket.

This sequence belongs to the SHMT family. In terms of assembly, homodimer. Pyridoxal 5'-phosphate serves as cofactor.

It localises to the cytoplasm. It carries out the reaction (6R)-5,10-methylene-5,6,7,8-tetrahydrofolate + glycine + H2O = (6S)-5,6,7,8-tetrahydrofolate + L-serine. The protein operates within one-carbon metabolism; tetrahydrofolate interconversion. It functions in the pathway amino-acid biosynthesis; glycine biosynthesis; glycine from L-serine: step 1/1. Its function is as follows. Catalyzes the reversible interconversion of serine and glycine with tetrahydrofolate (THF) serving as the one-carbon carrier. This reaction serves as the major source of one-carbon groups required for the biosynthesis of purines, thymidylate, methionine, and other important biomolecules. Also exhibits THF-independent aldolase activity toward beta-hydroxyamino acids, producing glycine and aldehydes, via a retro-aldol mechanism. The sequence is that of Serine hydroxymethyltransferase 3 from Pseudomonas aeruginosa (strain ATCC 15692 / DSM 22644 / CIP 104116 / JCM 14847 / LMG 12228 / 1C / PRS 101 / PAO1).